Reading from the N-terminus, the 330-residue chain is Stearoyl-CoA desaturase 5 (330 aa).

Residues 1-49 lie on the Cytoplasmic side of the membrane; sequence MPGPATDAGKIPFCDAKEEIRAGLESSEGGGGPERPGARGQRQNIVWRN. Asn-49 contributes to the substrate binding site. A helical transmembrane segment spans residues 50–70; it reads VVLMSLLHLGAVYSLVLIPKA. Topologically, residues 71-72 are lumenal; it reads KP. Residues 73-93 traverse the membrane as a helical segment; it reads LTLLWAYFCFLLAALGVTAGA. The Fe cation site is built by His-94 and His-99. Residues 94–99 carry the Histidine box-1 motif; that stretch reads HRLWSH. Topologically, residues 94 to 193 are cytoplasmic; that stretch reads HRLWSHRSYR…VVRIQRKYYK (100 aa). Substrate-binding residues include Asn-122, Arg-129, and Asp-130. Residues His-131, His-134, and His-135 each coordinate Fe cation. The Histidine box-2 motif lies at 131-135; sequence HRAHH. Substrate is bound by residues Arg-162 and Lys-163. A helical membrane pass occupies residues 194–214; that stretch reads ISVVLMCFVVPTLVPWYIWGE. Ser-215 is a topological domain (lumenal). Residues 216-238 traverse the membrane as a helical segment; the sequence is LWNSYFLASILRYTISLNISWLV. Position 236 (Trp-236) interacts with substrate. The Cytoplasmic segment spans residues 239-330; that stretch reads NSAAHMYGNR…RKARTGDSSA (92 aa). Fe cation-binding residues include His-243, His-272, His-275, and His-276. The Histidine box-3 signature appears at 272-276; sequence HNYHH.

The protein belongs to the fatty acid desaturase type 1 family. May self-associate and form homodimers. The cofactor is Fe(2+). In terms of tissue distribution, detected in fetal brain, and at lower levels in fetal kidney. Detected in adult brain and pancreas, and at lower levels in kidney and lung. Expressed in spiral ganglion cells and the organ of Corti of fetal cochlea.

Its subcellular location is the endoplasmic reticulum membrane. It catalyses the reaction octadecanoyl-CoA + 2 Fe(II)-[cytochrome b5] + O2 + 2 H(+) = (9Z)-octadecenoyl-CoA + 2 Fe(III)-[cytochrome b5] + 2 H2O. The catalysed reaction is hexadecanoyl-CoA + 2 Fe(II)-[cytochrome b5] + O2 + 2 H(+) = (9Z)-hexadecenoyl-CoA + 2 Fe(III)-[cytochrome b5] + 2 H2O. Its function is as follows. Stearoyl-CoA desaturase that utilizes O(2) and electrons from reduced cytochrome b5 to introduce the first double bond into saturated fatty acyl-CoA substrates. Catalyzes the insertion of a cis double bond at the delta-9 position into fatty acyl-CoA substrates including palmitoyl-CoA and stearoyl-CoA. Gives rise to a mixture of 16:1 and 18:1 unsaturated fatty acids. Involved in neuronal cell proliferation and differentiation through down-regulation of EGFR/AKT/MAPK and Wnt signaling pathways. The polypeptide is Stearoyl-CoA desaturase 5 (SCD5) (Homo sapiens (Human)).